A 1657-amino-acid chain; its full sequence is Androglobin (1657 aa).

Over residues 1 to 11 the composition is skewed to basic residues; that stretch reads MASKQAKRKEV. 2 disordered regions span residues 1 to 40 and 321 to 398; these read MASKQAKRKEVHRINSAHGSDKSKDLYHFGSNVPPGSFEQ and TKEN…SSDV. The region spanning 70–402 is the Calpain catalytic domain; sequence KDKTAKSPIF…RPSSDVQYSM (333 aa). The segment covering 321-386 has biased composition (basic and acidic residues); that stretch reads TKENKDGKDG…DGEKEKEKFK (66 aa). The Globin; C-terminal part domain maps to 762-889; it reads HVCSMTTFVI…EDVSLAEWVD (128 aa). Heme b-binding residues include Gln-791 and His-823. The region spanning 905–934 is the IQ domain; that stretch reads EIAAAVKIQSMWKGCYVRLLMKARKPETKE. A Globin; N-terminal part domain is found at 935-967; the sequence is NVTVADTLQKIWAVLEMNLEQYALSLLRLMFKS. Disordered stretches follow at residues 1184–1226, 1288–1356, 1422–1459, and 1638–1657; these read SKQV…TDTG, KHEE…QEDP, TTDTTTSAPSPETLSVSQSQTKSSEEGELDTGKYADIK, and IEKKSPASDSQKKKKVGKKK. The span at 1321–1336 shows a compositional bias: basic and acidic residues; sequence EKSAEKEKLAKEKQAP. Polar residues-rich tracts occupy residues 1341–1351 and 1422–1443; these read QQVQMPTAVHS and TTDTTTSAPSPETLSVSQSQTK. Residues 1585-1640 are a coiled coil; the sequence is DEVLEMYGEMRDSVDEARQKILDIREVYRNKLLEAERLRMEALAAQEAAVKIEIEK.

It in the central section; belongs to the globin family. In the N-terminal section; belongs to the peptidase C2 family. In terms of assembly, interacts with septin SEPT10; contributes to in vitro proteolytic cleavage of SEPT10 in a calmodulin-dependent manner. Interacts with CFAP69. Interacts with SPEF2. May interact with calmodulin. In terms of tissue distribution, strongly expressed in testis and lung. Weakly expressed in heart, brain, spleen, kidney and tongue.

Its subcellular location is the cell projection. It is found in the cilium. The protein localises to the flagellum. In terms of biological role, probable chimeric globin with a bis-histidyl six-coordinate heme-iron atom through which it could bind dioxygen, carbon monoxide and nitric oxide. Required for sperm flagellum formation and maturation of elongating spermatids, thus playing an essential role in male fertility. The protein is Androglobin of Mus musculus (Mouse).